A 104-amino-acid chain; its full sequence is Flagellar hook-basal body complex protein FliE (104 aa).

It belongs to the FliE family.

It localises to the bacterial flagellum basal body. The chain is Flagellar hook-basal body complex protein FliE from Pectobacterium carotovorum subsp. carotovorum (strain PC1).